The chain runs to 185 residues: Lipopolysaccharide export system protein LptA (185 aa).

Positions 1 to 27 are cleaved as a signal peptide; it reads MKFKTNKLSLNLVLASSLLAASIPAFA. Positions 166–185 are disordered; it reads PSQLQDKNNKGQTPAQKKGN.

The protein belongs to the LptA family. As to quaternary structure, component of the lipopolysaccharide transport and assembly complex.

The protein resides in the periplasm. Functionally, involved in the assembly of lipopolysaccharide (LPS). Required for the translocation of LPS from the inner membrane to the outer membrane. May form a bridge between the inner membrane and the outer membrane, via interactions with LptC and LptD, thereby facilitating LPS transfer across the periplasm. The chain is Lipopolysaccharide export system protein LptA from Escherichia coli O157:H7.